Here is a 429-residue protein sequence, read N- to C-terminus: UDP-N-acetylglucosamine 1-carboxyvinyltransferase (429 aa).

22–23 (KN) lines the phosphoenolpyruvate pocket. Arginine 102 lines the UDP-N-acetyl-alpha-D-glucosamine pocket. Residue cysteine 126 is the Proton donor of the active site. A 2-(S-cysteinyl)pyruvic acid O-phosphothioketal modification is found at cysteine 126. Residues 131 to 135 (RPVDL), aspartate 316, and isoleucine 338 each bind UDP-N-acetyl-alpha-D-glucosamine.

Belongs to the EPSP synthase family. MurA subfamily.

The protein localises to the cytoplasm. It catalyses the reaction phosphoenolpyruvate + UDP-N-acetyl-alpha-D-glucosamine = UDP-N-acetyl-3-O-(1-carboxyvinyl)-alpha-D-glucosamine + phosphate. It functions in the pathway cell wall biogenesis; peptidoglycan biosynthesis. Cell wall formation. Adds enolpyruvyl to UDP-N-acetylglucosamine. The protein is UDP-N-acetylglucosamine 1-carboxyvinyltransferase of Rhodopseudomonas palustris (strain BisB18).